The primary structure comprises 563 residues: Efflux pump notK (563 aa).

A disordered region spans residues 1-32 (MTKDEDSGTTDGGYSTPDIAVQEKQDQPPAPE). The next 14 membrane-spanning stretches (helical) occupy residues 48–68 (IFLS…AIPG), 78–98 (DVGW…PMWG), 108–128 (LVYL…AAAP), 138–158 (ALQG…ISYV), 165–185 (AMLI…GPLL), 197–217 (WCFW…VLFF), 239–259 (LPGF…LQWG), 270–290 (VIAT…VEWI), 312–332 (LYGW…PIYF), 345–365 (VNSL…GFLI), 374–394 (YEFA…TLDI), 406–426 (VIFG…LESF), 438–458 (VMLM…QSIF), and 509–529 (VFAF…AIPF). The segment at 538 to 563 (GPSNGQEEEEGKKDGPAEKKEDEVAV) is disordered. Residues 547-563 (EGKKDGPAEKKEDEVAV) show a composition bias toward basic and acidic residues.

It belongs to the major facilitator superfamily. TCR/Tet family.

It localises to the cell membrane. Efflux pump; part of the gene cluster that mediates the biosynthesis of notoamide, a fungal indole alkaloid that belongs to a family of natural products containing a characteristic bicyclo[2.2.2]diazaoctane core. In Aspergillus sp. (strain MF297-2), this protein is Efflux pump notK.